A 625-amino-acid polypeptide reads, in one-letter code: Protein LEO1 homolog (625 aa).

Disordered stretches follow at residues 1–214 and 415–625; these read MVKG…DMVL and EREK…SDED. 2 stretches are compositionally biased toward acidic residues: residues 40 to 55 and 63 to 80; these read DEAE…GEAE and EAES…PGES. Composition is skewed to basic and acidic residues over residues 97–113, 121–137, and 182–197; these read SEAR…EHGG, QEVV…KHYE, and EYVR…RSPI. Position 203 is a phosphoserine (serine 203). Over residues 415–425 the composition is skewed to basic and acidic residues; the sequence is EREKEKREKAE. Positions 415–539 form a coiled coil; the sequence is EREKEKREKA…ETEEEEEEKS (125 aa). Residues 426-436 show a composition bias toward polar residues; that stretch reads SQNLKASTKLS. A compositionally biased stretch (basic and acidic residues) spans 471-491; the sequence is YRSNRGYEEDLEAEAQRERRI. A compositionally biased stretch (basic residues) spans 492–501; the sequence is LNAKKSHKGI. Acidic residues predominate over residues 523–537; sequence EREESEYETEEEEEE. The segment covering 538–547 has biased composition (basic and acidic residues); the sequence is KSPARGRGKD. 5 positions are modified to phosphoserine: serine 548, serine 570, serine 600, serine 605, and serine 622. Residues 548–561 are compositionally biased toward acidic residues; that stretch reads SEDEYEEDAEEDEE.

Belongs to the LEO1 family. Component of the nuclear PAF1 complex (PAF1C), which consists of VIP2/ELF7/PAF1, VIP3/SKI8/WDR61, VIP4/LEO1, VIP5/RTF1, VIP6/ELF8/CTR9 and CDC73. Interacts with VIP3 and VIP6. Expressed in roots, shoot apices, stems, cauline leaves, inflorescence apices and flowers.

It is found in the nucleus. In terms of biological role, component of the PAF1 complex (PAF1C) which is involved in histone modifications such as methylation on histone H3 'Lys-4' (H3K4me3). Involved in regulation of flowering time. Required for the expression of the flowering repressor and MADS box gene FLC. Involved in the control of seed dormancy and germination. This is Protein LEO1 homolog from Arabidopsis thaliana (Mouse-ear cress).